The primary structure comprises 532 residues: Developmental and secondary metabolism regulator ve1 (532 aa).

The Velvet domain occupies 26–220; that stretch reads NRSLWYQLTV…ADQGCRVRIR (195 aa). Residues 40 to 45 carry the Nuclear localization signal motif; sequence ERARAC. A compositionally biased stretch (basic residues) spans 217-229; that stretch reads VRIRRDVRMRKRD. Disordered stretches follow at residues 217–440 and 458–520; these read VRIR…TEPS and PQVD…RADG. Positions 233–250 are enriched in low complexity; the sequence is GGNNNNNNNAGNNAGNNG. Composition is skewed to basic and acidic residues over residues 251-260 and 283-294; these read FERREEDFGR and SEHRASYSDVSR. Residues 302-317 are compositionally biased toward pro residues; that stretch reads YPPPPPPPPSYDPTPS. Residues 397-411 are compositionally biased toward low complexity; it reads STSTYVPPSPSVYST. The segment at 435-463 is PEST; that stretch reads MNTEPSRGSIKISALVEPMPVIEPQVDPL. A compositionally biased stretch (polar residues) spans 481 to 493; it reads FAQNTRPLFNGQR.

It belongs to the velvet family. VeA subfamily. As to quaternary structure, component of the heterotrimeric velvet complex composed of laeA, ve1 and velB; Ve1 acting as a bridging protein between laeA and velB. Interacts directly with laeA and velB.

Its subcellular location is the nucleus. The protein localises to the cytoplasm. In terms of biological role, component of the velvet transcription factor complex that controls sexual/asexual developmental ratio in response to light, promoting sexual development in the darkness while stimulating asexual sporulation under illumination. The velvet complex hat acts as a global regulator for secondary metabolite gene expression. Controls the expression of the aurofusarin and trichothecene gene clusters. Also controls the expression of the deoxynivalenol (DON) gene cluster. Regulates hyphal growth and pigment formation. Acts as a positive regulator of virulence. The protein is Developmental and secondary metabolism regulator ve1 of Gibberella zeae (strain ATCC MYA-4620 / CBS 123657 / FGSC 9075 / NRRL 31084 / PH-1) (Wheat head blight fungus).